The sequence spans 814 residues: Oxysterol-binding protein-related protein 1C (814 aa).

Residues 103-235 (GNGIAGILYK…WVEALQAVKD (133 aa)) form the PH domain. The stretch at 300-367 (LLIDTLRQLE…AEEEFDEEEN (68 aa)) forms a coiled coil. Disordered stretches follow at residues 319-366 (VVDE…DEEE) and 379-411 (SSFK…PSIK). Acidic residues predominate over residues 347–366 (ESDDDNERGDAAEEEFDEEE). Positions 379 to 394 (SSFKSSGSGFRTSSFS) are enriched in low complexity. Over residues 395 to 407 (SDEDGFESEDDID) the composition is skewed to acidic residues.

This sequence belongs to the OSBP family. As to expression, expressed in roots, leaves, stems, flowers and pollen.

Its function is as follows. May be involved in the transport of sterols. The protein is Oxysterol-binding protein-related protein 1C (ORP1C) of Arabidopsis thaliana (Mouse-ear cress).